Reading from the N-terminus, the 374-residue chain is Putative glutamate--cysteine ligase 2 (374 aa).

The protein belongs to the glutamate--cysteine ligase type 2 family. YbdK subfamily.

It carries out the reaction L-cysteine + L-glutamate + ATP = gamma-L-glutamyl-L-cysteine + ADP + phosphate + H(+). In terms of biological role, ATP-dependent carboxylate-amine ligase which exhibits weak glutamate--cysteine ligase activity. In Paracidovorax citrulli (strain AAC00-1) (Acidovorax citrulli), this protein is Putative glutamate--cysteine ligase 2.